The chain runs to 370 residues: 3-dehydroquinate synthase (370 aa).

NAD(+) contacts are provided by residues 112–116, 136–137, lysine 149, lysine 158, and 176–179; these read GVIGD, TT, and TLAT. 3 residues coordinate Zn(2+): glutamate 191, histidine 254, and histidine 276.

The protein belongs to the sugar phosphate cyclases superfamily. Dehydroquinate synthase family. Co(2+) is required as a cofactor. Zn(2+) serves as cofactor. Requires NAD(+) as cofactor.

The protein resides in the cytoplasm. It catalyses the reaction 7-phospho-2-dehydro-3-deoxy-D-arabino-heptonate = 3-dehydroquinate + phosphate. It participates in metabolic intermediate biosynthesis; chorismate biosynthesis; chorismate from D-erythrose 4-phosphate and phosphoenolpyruvate: step 2/7. Functionally, catalyzes the conversion of 3-deoxy-D-arabino-heptulosonate 7-phosphate (DAHP) to dehydroquinate (DHQ). This chain is 3-dehydroquinate synthase, found in Xylella fastidiosa (strain M23).